The sequence spans 86 residues: MAHKKAAGSSRNGRDSESKRLGVKRFGGQFVKAGNILVRQRGTEFHPGENVGCGRDHTLFAKQDGFVKFNVGGPLNRRTVSIVAAE.

The segment at 1-21 (MAHKKAAGSSRNGRDSESKRL) is disordered.

The protein belongs to the bacterial ribosomal protein bL27 family.

This chain is Large ribosomal subunit protein bL27, found in Hahella chejuensis (strain KCTC 2396).